Reading from the N-terminus, the 625-residue chain is Chaperone protein HtpG (625 aa).

Residues 1–332 (MSNKQNTAVQ…TEDLSLNVSR (332 aa)) are a; substrate-binding. The segment at 333–545 (EIVQSSPVMS…KDAMDSQMER (213 aa)) is b. The tract at residues 546-625 (MMKMMQQEMP…ELIEAATLSR (80 aa)) is c.

This sequence belongs to the heat shock protein 90 family. In terms of assembly, homodimer.

Its subcellular location is the cytoplasm. Molecular chaperone. Has ATPase activity. The protein is Chaperone protein HtpG of Chlorobium luteolum (strain DSM 273 / BCRC 81028 / 2530) (Pelodictyon luteolum).